The primary structure comprises 78 residues: UPF0349 protein Sca_0544 (78 aa).

Belongs to the UPF0349 family.

This is UPF0349 protein Sca_0544 from Staphylococcus carnosus (strain TM300).